The sequence spans 570 residues: Urease subunit alpha (570 aa).

In terms of domain architecture, Urease spans 131–570 (GGMDSHIHFI…LPMAQRYFLF (440 aa)). Residues His-136, His-138, and Lys-219 each coordinate Ni(2+). Lys-219 carries the N6-carboxylysine modification. A substrate-binding site is contributed by His-221. Residues His-248 and His-274 each coordinate Ni(2+). His-322 functions as the Proton donor in the catalytic mechanism. Residue Asp-362 coordinates Ni(2+).

Belongs to the metallo-dependent hydrolases superfamily. Urease alpha subunit family. As to quaternary structure, heterotrimer of UreA (gamma), UreB (beta) and UreC (alpha) subunits. Three heterotrimers associate to form the active enzyme. The cofactor is Ni cation. In terms of processing, carboxylation allows a single lysine to coordinate two nickel ions.

The protein resides in the cytoplasm. The enzyme catalyses urea + 2 H2O + H(+) = hydrogencarbonate + 2 NH4(+). It functions in the pathway nitrogen metabolism; urea degradation; CO(2) and NH(3) from urea (urease route): step 1/1. This is Urease subunit alpha from Sinorhizobium fredii (strain NBRC 101917 / NGR234).